The chain runs to 256 residues: uncharacterized protein (256 aa).

Residues isoleucine 18, serine 37, lysine 46, aspartate 66, tyrosine 164, lysine 168, valine 197, and threonine 199 each contribute to the NADP(+) site. The Proton donor role is filled by tyrosine 164. Lysine 168 serves as the catalytic Lowers pKa of active site Tyr.

It belongs to the short-chain dehydrogenases/reductases (SDR) family.

It localises to the cytoplasm. This is an uncharacterized protein from Saccharomyces cerevisiae (strain ATCC 204508 / S288c) (Baker's yeast).